Consider the following 661-residue polypeptide: UvrABC system protein B (661 aa).

The region spanning 26–181 (KGIQEGRKHQ…LLRKLVDIQY (156 aa)) is the Helicase ATP-binding domain. 39-46 (GATGTGKT) is a binding site for ATP. A Beta-hairpin motif is present at residues 92-115 (YYDYYQPEAYVPQTDTFIEKDASI). The 167-residue stretch at 430 to 596 (QIDDLIGEIQ…TINKEIRDVI (167 aa)) folds into the Helicase C-terminal domain. Positions 625–660 (QKVVEQMEHEMKEAARALDFERAAELRDLLLELKAE) constitute a UVR domain.

The protein belongs to the UvrB family. As to quaternary structure, forms a heterotetramer with UvrA during the search for lesions. Interacts with UvrC in an incision complex.

The protein resides in the cytoplasm. The UvrABC repair system catalyzes the recognition and processing of DNA lesions. A damage recognition complex composed of 2 UvrA and 2 UvrB subunits scans DNA for abnormalities. Upon binding of the UvrA(2)B(2) complex to a putative damaged site, the DNA wraps around one UvrB monomer. DNA wrap is dependent on ATP binding by UvrB and probably causes local melting of the DNA helix, facilitating insertion of UvrB beta-hairpin between the DNA strands. Then UvrB probes one DNA strand for the presence of a lesion. If a lesion is found the UvrA subunits dissociate and the UvrB-DNA preincision complex is formed. This complex is subsequently bound by UvrC and the second UvrB is released. If no lesion is found, the DNA wraps around the other UvrB subunit that will check the other stand for damage. The polypeptide is UvrABC system protein B (Bacillus velezensis (strain DSM 23117 / BGSC 10A6 / LMG 26770 / FZB42) (Bacillus amyloliquefaciens subsp. plantarum)).